The following is a 247-amino-acid chain: Myelin-oligodendrocyte glycoprotein (247 aa).

The first 29 residues, 1–29 (MASLSRPSLPSCLCSFLLLLLLQVSSSYA), serve as a signal peptide directing secretion. At 30–154 (GQFRVIGPRH…EDPFYWVSPG (125 aa)) the chain is on the extracellular side. Positions 32–145 (FRVIGPRHPI…EEAAMELKVE (114 aa)) constitute an Ig-like V-type domain. Cysteines 53 and 127 form a disulfide. Asn60 is a glycosylation site (N-linked (GlcNAc...) asparagine). The helical transmembrane segment at 155–175 (VLVLLAVLPVLLLQITVGLIF) threads the bilayer. The Cytoplasmic portion of the chain corresponds to 176-210 (LCLQYRLRGKLRAEIENLHRTFDPHFLRVPCWKIT). The helical transmembrane segment at 211–231 (LFVIVPVLGPLVALIICYNWL) threads the bilayer. At 232–247 (HRRLAGQFLEELRNPF) the chain is on the extracellular side.

Belongs to the immunoglobulin superfamily. BTN/MOG family. In terms of assembly, homodimer. May form heterodimers between the different isoforms. As to quaternary structure, (Microbial infection) Interacts with rubella virus E2 glycoprotein. As to expression, found exclusively in the CNS, where it is localized on the surface of myelin and oligodendrocyte cytoplasmic membranes.

It localises to the cell membrane. Mediates homophilic cell-cell adhesion. Minor component of the myelin sheath. May be involved in completion and/or maintenance of the myelin sheath and in cell-cell communication. In terms of biological role, (Microbial infection) Acts as a receptor for rubella virus. The chain is Myelin-oligodendrocyte glycoprotein (MOG) from Homo sapiens (Human).